The following is a 227-amino-acid chain: Pectinesterase inhibitor 28 (227 aa).

The N-terminal stretch at M1–C25 is a signal peptide. Positions S28–P50 are disordered. Basic residues predominate over residues K34–R43. C66 and C75 are oxidised to a cystine. Residues N67, N104, and N117 are each glycosylated (N-linked (GlcNAc...) asparagine). C139 and C179 are joined by a disulfide.

Belongs to the PMEI family. In terms of tissue distribution, expressed in roots, leaves, culms and flag leaves.

It is found in the secreted. It localises to the extracellular space. The protein localises to the apoplast. Its function is as follows. Pectin methylesterase (PME) inhibitor that inhibits PME in vitro. Functions as a critical structural modulator by regulating the degree of pectin methylesterification and the physiochemical properties of the cell wall components. The polypeptide is Pectinesterase inhibitor 28 (Oryza sativa subsp. japonica (Rice)).